The sequence spans 67 residues: Large ribosomal subunit protein bL31c (67 aa).

Belongs to the bacterial ribosomal protein bL31 family. Type A subfamily. As to quaternary structure, part of the 50S ribosomal subunit.

The protein resides in the plastid. It is found in the chloroplast. Functionally, binds the 23S rRNA. In Cyanidioschyzon merolae (strain NIES-3377 / 10D) (Unicellular red alga), this protein is Large ribosomal subunit protein bL31c (rpl31).